We begin with the raw amino-acid sequence, 355 residues long: Anthranilate phosphoribosyltransferase (355 aa).

5-phospho-alpha-D-ribose 1-diphosphate contacts are provided by residues G102, 105–106 (GD), S110, 112–115 (NIST), 130–138 (KHGNRSVSS), and S142. G102 serves as a coordination point for anthranilate. S114 contacts Mg(2+). Anthranilate is bound at residue N133. R188 contacts anthranilate. Residues D246 and E247 each coordinate Mg(2+).

This sequence belongs to the anthranilate phosphoribosyltransferase family. As to quaternary structure, homodimer. It depends on Mg(2+) as a cofactor.

It carries out the reaction N-(5-phospho-beta-D-ribosyl)anthranilate + diphosphate = 5-phospho-alpha-D-ribose 1-diphosphate + anthranilate. Its pathway is amino-acid biosynthesis; L-tryptophan biosynthesis; L-tryptophan from chorismate: step 2/5. Its function is as follows. Catalyzes the transfer of the phosphoribosyl group of 5-phosphorylribose-1-pyrophosphate (PRPP) to anthranilate to yield N-(5'-phosphoribosyl)-anthranilate (PRA). This is Anthranilate phosphoribosyltransferase from Pectobacterium atrosepticum (strain SCRI 1043 / ATCC BAA-672) (Erwinia carotovora subsp. atroseptica).